Here is a 310-residue protein sequence, read N- to C-terminus: Methionyl-tRNA formyltransferase (310 aa).

110–113 (SLLP) is a (6S)-5,6,7,8-tetrahydrofolate binding site.

The protein belongs to the Fmt family.

The catalysed reaction is L-methionyl-tRNA(fMet) + (6R)-10-formyltetrahydrofolate = N-formyl-L-methionyl-tRNA(fMet) + (6S)-5,6,7,8-tetrahydrofolate + H(+). Functionally, attaches a formyl group to the free amino group of methionyl-tRNA(fMet). The formyl group appears to play a dual role in the initiator identity of N-formylmethionyl-tRNA by promoting its recognition by IF2 and preventing the misappropriation of this tRNA by the elongation apparatus. This chain is Methionyl-tRNA formyltransferase, found in Clostridium tetani (strain Massachusetts / E88).